The sequence spans 485 residues: Cysteine--tRNA ligase (485 aa).

Position 27 (Cys-27) interacts with Zn(2+). Residues 29-39 (ITAYDLCHIGH) carry the 'HIGH' region motif. Residues Cys-208, His-233, and Glu-237 each coordinate Zn(2+). Residues 265-269 (KMSKS) carry the 'KMSKS' region motif. Lys-268 is an ATP binding site.

Belongs to the class-I aminoacyl-tRNA synthetase family. In terms of assembly, monomer. It depends on Zn(2+) as a cofactor.

The protein resides in the cytoplasm. The catalysed reaction is tRNA(Cys) + L-cysteine + ATP = L-cysteinyl-tRNA(Cys) + AMP + diphosphate. In Nitratidesulfovibrio vulgaris (strain DSM 19637 / Miyazaki F) (Desulfovibrio vulgaris), this protein is Cysteine--tRNA ligase.